Consider the following 281-residue polypeptide: Pantothenate synthetase (281 aa).

An ATP-binding site is contributed by 30–37; that stretch reads MGYLHEGH. Residue His37 is the Proton donor of the active site. Gln60 provides a ligand contact to (R)-pantoate. Gln60 is a binding site for beta-alanine. 146–149 serves as a coordination point for ATP; sequence GEKD. Gln152 lines the (R)-pantoate pocket. Residues Ile175 and 183 to 186 each bind ATP; that span reads KSSR.

The protein belongs to the pantothenate synthetase family. In terms of assembly, homodimer.

Its subcellular location is the cytoplasm. It carries out the reaction (R)-pantoate + beta-alanine + ATP = (R)-pantothenate + AMP + diphosphate + H(+). It functions in the pathway cofactor biosynthesis; (R)-pantothenate biosynthesis; (R)-pantothenate from (R)-pantoate and beta-alanine: step 1/1. In terms of biological role, catalyzes the condensation of pantoate with beta-alanine in an ATP-dependent reaction via a pantoyl-adenylate intermediate. This is Pantothenate synthetase from Ruminiclostridium cellulolyticum (strain ATCC 35319 / DSM 5812 / JCM 6584 / H10) (Clostridium cellulolyticum).